Reading from the N-terminus, the 328-residue chain is Octanoyltransferase, mitochondrial (328 aa).

One can recognise a BPL/LPL catalytic domain in the interval 108-312 (MKPNPIILTF…EMTKLLGIKT (205 aa)). Substrate-binding positions include 162-169 (RGGQVTFH), 241-243 (SVG), and 254-256 (GVA). The Acyl-thioester intermediate role is filled by C272.

The protein belongs to the LipB family.

Its subcellular location is the mitochondrion. It carries out the reaction octanoyl-[ACP] + L-lysyl-[protein] = N(6)-octanoyl-L-lysyl-[protein] + holo-[ACP] + H(+). The protein operates within protein modification; protein lipoylation via endogenous pathway; protein N(6)-(lipoyl)lysine from octanoyl-[acyl-carrier-protein]: step 1/2. Catalyzes the transfer of endogenously produced octanoic acid from octanoyl-acyl-carrier-protein onto the lipoyl domains of lipoate-dependent enzymes. Lipoyl-ACP can also act as a substrate although octanoyl-ACP is likely to be the physiological substrate. The chain is Octanoyltransferase, mitochondrial (LIP2) from Saccharomyces cerevisiae (strain ATCC 204508 / S288c) (Baker's yeast).